We begin with the raw amino-acid sequence, 593 residues long: 3-hydroxy-3-methylglutaryl-coenzyme A reductase (593 aa).

The disordered stretch occupies residues 1-36; sequence MDVRRRSINSIHQIPSVGGTAPPMLKPKQPTKVDAV. 2 helical membrane-spanning segments follow: residues 52–72 and 94–114; these read LYIT…YLLV and AIFT…IGLV. The tract at residues 115–177 is linker; the sequence is QPFTSRSSHD…PVPISPPSSE (63 aa). The interval 178-593 is catalytic; the sequence is EDEEIIKSVV…SNKDVTKASS (416 aa). E272 functions as the Charge relay system in the catalytic mechanism. A glycan (N-linked (GlcNAc...) asparagine) is linked at N336. K404 acts as the Charge relay system in catalysis. A glycan (N-linked (GlcNAc...) asparagine) is linked at N449. The active-site Charge relay system is the D480. H578 functions as the Proton donor in the catalytic mechanism. A glycan (N-linked (GlcNAc...) asparagine) is linked at N582.

It belongs to the HMG-CoA reductase family.

The protein localises to the endoplasmic reticulum membrane. It catalyses the reaction (R)-mevalonate + 2 NADP(+) + CoA = (3S)-3-hydroxy-3-methylglutaryl-CoA + 2 NADPH + 2 H(+). It functions in the pathway metabolic intermediate biosynthesis; (R)-mevalonate biosynthesis; (R)-mevalonate from acetyl-CoA: step 3/3. Catalyzes the synthesis of mevalonate. The specific precursor of all isoprenoid compounds present in plants. The polypeptide is 3-hydroxy-3-methylglutaryl-coenzyme A reductase (Camptotheca acuminata (Happy tree)).